The following is a 458-amino-acid chain: Tyrosine phenol-lyase (458 aa).

N6-(pyridoxal phosphate)lysine is present on Lys-258.

This sequence belongs to the beta-eliminating lyase family. In terms of assembly, homotetramer. Pyridoxal 5'-phosphate is required as a cofactor.

It catalyses the reaction L-tyrosine + H2O = phenol + pyruvate + NH4(+). This chain is Tyrosine phenol-lyase (tpl), found in Pasteurella multocida (strain Pm70).